Here is a 153-residue protein sequence, read N- to C-terminus: MSRVTAIISALIICIIVSLSWAVNHYRDNAIAYKVQRDKNARELKLANAAITDMQMRQRDVAALDAKYTKELADAKAENDALRDDVAAGRRRLHIKAVCQSVREATTASGVDNAASPRLADTAERDYFTLRERLITMQKQLEGTQKYINEQCR.

Necessary for host cell lysis. It is believed to code for an endopeptidase that cleaves the amino-carboxyl cross-link between the diaminopimelic acid and D-alanine residues in the murein component of the bacterial cell wall. The protein is Prophage Rz endopeptidase RzpD (rzpD) of Escherichia coli (strain K12).